The primary structure comprises 391 residues: UDP-N-acetylglucosamine--N-acetylmuramyl-(pentapeptide) pyrophosphoryl-undecaprenol N-acetylglucosamine transferase (391 aa).

Residues 11–13 (TGG), Arg-176, Ser-206, and Gln-312 each bind UDP-N-acetyl-alpha-D-glucosamine.

It belongs to the glycosyltransferase 28 family. MurG subfamily.

It localises to the cell inner membrane. The enzyme catalyses di-trans,octa-cis-undecaprenyl diphospho-N-acetyl-alpha-D-muramoyl-L-alanyl-D-glutamyl-meso-2,6-diaminopimeloyl-D-alanyl-D-alanine + UDP-N-acetyl-alpha-D-glucosamine = di-trans,octa-cis-undecaprenyl diphospho-[N-acetyl-alpha-D-glucosaminyl-(1-&gt;4)]-N-acetyl-alpha-D-muramoyl-L-alanyl-D-glutamyl-meso-2,6-diaminopimeloyl-D-alanyl-D-alanine + UDP + H(+). It functions in the pathway cell wall biogenesis; peptidoglycan biosynthesis. Functionally, cell wall formation. Catalyzes the transfer of a GlcNAc subunit on undecaprenyl-pyrophosphoryl-MurNAc-pentapeptide (lipid intermediate I) to form undecaprenyl-pyrophosphoryl-MurNAc-(pentapeptide)GlcNAc (lipid intermediate II). This is UDP-N-acetylglucosamine--N-acetylmuramyl-(pentapeptide) pyrophosphoryl-undecaprenol N-acetylglucosamine transferase from Treponema denticola (strain ATCC 35405 / DSM 14222 / CIP 103919 / JCM 8153 / KCTC 15104).